The following is a 224-amino-acid chain: UPF0111 protein CPn_0681/CP_0066/CPj0681/CpB0708 (224 aa).

Belongs to the UPF0111 family.

The chain is UPF0111 protein CPn_0681/CP_0066/CPj0681/CpB0708 from Chlamydia pneumoniae (Chlamydophila pneumoniae).